A 402-amino-acid chain; its full sequence is Acyl-[acyl-carrier-protein] desaturase 3, chloroplastic (402 aa).

Disordered stretches follow at residues 1–25 (MSLT…GGAS) and 38–66 (VGGI…THTL). A chloroplast-targeting transit peptide spans 1 to 32 (MSLTGCLPPRPPCSMRRRTSGGGASVSPVVVM). Residues glutamate 139, glutamate 178, histidine 181, glutamate 231, glutamate 264, and histidine 267 each contribute to the Fe cation site.

It belongs to the fatty acid desaturase type 2 family. In terms of assembly, homodimer. It depends on Fe(2+) as a cofactor.

Its subcellular location is the plastid. It is found in the chloroplast. Its pathway is lipid metabolism; fatty acid metabolism. Its function is as follows. Introduces a cis double bond in the acyl chain of an acyl-[acyl-carrier protein]. The protein is Acyl-[acyl-carrier-protein] desaturase 3, chloroplastic of Oryza sativa subsp. indica (Rice).